Reading from the N-terminus, the 300-residue chain is 4-hydroxy-tetrahydrodipicolinate synthase (300 aa).

Position 54 (T54) interacts with pyruvate. Y142 acts as the Proton donor/acceptor in catalysis. The active-site Schiff-base intermediate with substrate is K170. I212 serves as a coordination point for pyruvate.

Belongs to the DapA family. In terms of assembly, homotetramer; dimer of dimers.

It localises to the cytoplasm. It catalyses the reaction L-aspartate 4-semialdehyde + pyruvate = (2S,4S)-4-hydroxy-2,3,4,5-tetrahydrodipicolinate + H2O + H(+). It participates in amino-acid biosynthesis; L-lysine biosynthesis via DAP pathway; (S)-tetrahydrodipicolinate from L-aspartate: step 3/4. Its function is as follows. Catalyzes the condensation of (S)-aspartate-beta-semialdehyde [(S)-ASA] and pyruvate to 4-hydroxy-tetrahydrodipicolinate (HTPA). This chain is 4-hydroxy-tetrahydrodipicolinate synthase, found in Halorhodospira halophila (strain DSM 244 / SL1) (Ectothiorhodospira halophila (strain DSM 244 / SL1)).